Reading from the N-terminus, the 117-residue chain is Large ribosomal subunit protein bL20 (117 aa).

This sequence belongs to the bacterial ribosomal protein bL20 family.

Its function is as follows. Binds directly to 23S ribosomal RNA and is necessary for the in vitro assembly process of the 50S ribosomal subunit. It is not involved in the protein synthesizing functions of that subunit. In Rickettsia canadensis (strain McKiel), this protein is Large ribosomal subunit protein bL20.